We begin with the raw amino-acid sequence, 385 residues long: Trehalose-phosphate phosphatase A (385 aa).

The segment at 1 to 21 is disordered; the sequence is MDMKSGHSSPVMTDSPPISNS.

Belongs to the trehalose phosphatase family. A divalent metal cation is required as a cofactor. Expressed in flowers.

It catalyses the reaction alpha,alpha-trehalose 6-phosphate + H2O = alpha,alpha-trehalose + phosphate. It functions in the pathway glycan biosynthesis; trehalose biosynthesis. In terms of biological role, removes the phosphate from trehalose 6-phosphate to produce free trehalose. Trehalose accumulation in plant may improve abiotic stress tolerance. The chain is Trehalose-phosphate phosphatase A (TPPA) from Arabidopsis thaliana (Mouse-ear cress).